The following is a 299-amino-acid chain: ATP phosphoribosyltransferase (299 aa).

This sequence belongs to the ATP phosphoribosyltransferase family. Long subfamily. It depends on Mg(2+) as a cofactor.

It localises to the cytoplasm. The enzyme catalyses 1-(5-phospho-beta-D-ribosyl)-ATP + diphosphate = 5-phospho-alpha-D-ribose 1-diphosphate + ATP. The protein operates within amino-acid biosynthesis; L-histidine biosynthesis; L-histidine from 5-phospho-alpha-D-ribose 1-diphosphate: step 1/9. Its activity is regulated as follows. Feedback inhibited by histidine. Functionally, catalyzes the condensation of ATP and 5-phosphoribose 1-diphosphate to form N'-(5'-phosphoribosyl)-ATP (PR-ATP). Has a crucial role in the pathway because the rate of histidine biosynthesis seems to be controlled primarily by regulation of HisG enzymatic activity. This Campylobacter jejuni subsp. jejuni serotype O:2 (strain ATCC 700819 / NCTC 11168) protein is ATP phosphoribosyltransferase.